A 646-amino-acid polypeptide reads, in one-letter code: Protein kinase YegI (646 aa).

The region spanning 13–300 is the Protein kinase domain; it reads VTPGRELGKG…KAWVAALDLL (288 aa). Residues 19-27 and Lys-39 contribute to the ATP site; that span reads LGKGGEGAV. Asp-141 functions as the Proton acceptor in the catalytic mechanism.

In terms of processing, autophosphorylated.

Its function is as follows. Probable serine/threonine kinase. The sequence is that of Protein kinase YegI (yegI) from Escherichia coli O157:H7.